A 213-amino-acid polypeptide reads, in one-letter code: Probable nicotinate-nucleotide adenylyltransferase (213 aa).

This sequence belongs to the NadD family.

It carries out the reaction nicotinate beta-D-ribonucleotide + ATP + H(+) = deamido-NAD(+) + diphosphate. It participates in cofactor biosynthesis; NAD(+) biosynthesis; deamido-NAD(+) from nicotinate D-ribonucleotide: step 1/1. In terms of biological role, catalyzes the reversible adenylation of nicotinate mononucleotide (NaMN) to nicotinic acid adenine dinucleotide (NaAD). This chain is Probable nicotinate-nucleotide adenylyltransferase, found in Pectobacterium atrosepticum (strain SCRI 1043 / ATCC BAA-672) (Erwinia carotovora subsp. atroseptica).